The following is a 387-amino-acid chain: BarH-like 2 homeobox protein (387 aa).

Disordered regions lie at residues 1–145, 157–240, and 367–387; these read MTME…FLIK, CAPY…TAFS, and PGGQPALNPLSSPIPGTPHPR. Residues 7–24 show a composition bias toward polar residues; the sequence is SGSSFGIDTILSSASSGS. Residues 100–113 are compositionally biased toward low complexity; that stretch reads APTQSLQPLPQQQQ. Over residues 114 to 126 the composition is skewed to pro residues; that stretch reads PLPPQQPPPPPPQ. Residues 127–141 are compositionally biased toward low complexity; the sequence is QLGSAASAPRTSTSS. Polar residues predominate over residues 160 to 178; sequence YSTSVSSPHHTPKQESNAV. A compositionally biased stretch (basic and acidic residues) spans 180-220; it reads ESFRPKLEQEDSKTKLDKREDSQSDIKCHGTKEEGDREITS. The segment at residues 232–291 is a DNA-binding region (homeobox); that stretch reads PRKARTAFSDHQLNQLERSFERQKYLSVQDRMDLAAALNLTDTQVKTWYQNRRTKWKRQT.

It belongs to the BAR homeobox family.

The protein resides in the nucleus. Functionally, potential regulator of neural basic helix-loop-helix genes. The protein is BarH-like 2 homeobox protein (BARHL2) of Homo sapiens (Human).